We begin with the raw amino-acid sequence, 458 residues long: Mitochondrial distribution and morphology protein 10 (458 aa).

Residues 307–339 (LDQRRTEPLDAPNTNSSVFSKERVQKKQGPKED) are disordered. Basic and acidic residues predominate over residues 326–339 (SKERVQKKQGPKED).

Belongs to the MDM10 family. Component of the ER-mitochondria encounter structure (ERMES) or MDM complex, composed of MMM1, MDM10, MDM12 and MDM34. Associates with the mitochondrial outer membrane sorting assembly machinery SAM(core) complex.

The protein resides in the mitochondrion outer membrane. Functionally, component of the ERMES/MDM complex, which serves as a molecular tether to connect the endoplasmic reticulum and mitochondria. Components of this complex are involved in the control of mitochondrial shape and protein biogenesis and may function in phospholipid exchange. MDM10 is involved in the late assembly steps of the general translocase of the mitochondrial outer membrane (TOM complex). Functions in the TOM40-specific route of the assembly of outer membrane beta-barrel proteins, including the association of TOM40 with the receptor TOM22 and small TOM proteins. Can associate with the SAM(core) complex as well as the MDM12-MMM1 complex, both involved in late steps of the major beta-barrel assembly pathway, that is responsible for biogenesis of all outer membrane beta-barrel proteins. May act as a switch that shuttles between both complexes and channels precursor proteins into the TOM40-specific pathway. Plays a role in mitochondrial morphology and in the inheritance of mitochondria. The polypeptide is Mitochondrial distribution and morphology protein 10 (Lachancea thermotolerans (strain ATCC 56472 / CBS 6340 / NRRL Y-8284) (Yeast)).